A 360-amino-acid chain; its full sequence is Phosphate acyltransferase (360 aa).

The protein belongs to the PlsX family. In terms of assembly, homodimer. Probably interacts with PlsY.

Its subcellular location is the cytoplasm. It carries out the reaction a fatty acyl-[ACP] + phosphate = an acyl phosphate + holo-[ACP]. Its pathway is lipid metabolism; phospholipid metabolism. Its function is as follows. Catalyzes the reversible formation of acyl-phosphate (acyl-PO(4)) from acyl-[acyl-carrier-protein] (acyl-ACP). This enzyme utilizes acyl-ACP as fatty acyl donor, but not acyl-CoA. The protein is Phosphate acyltransferase of Thermobifida fusca (strain YX).